We begin with the raw amino-acid sequence, 391 residues long: MVMFKKIKSFEVVFNDPEKVYGSGEKVAGRVIVEVCEVTRVKAVRILACGVAKVLWMQGSQQCKQTSEYLRYEDTLLLEDQPTGENEMVIMRPGNKYEYKFGFELPQGPLGTSFKGKYGCVDYWVKAFLDRPSQPTQETKKNFEVVDLVDVNTPDLMAPVSAKKEKKVSCMFIPDGRVSVSARIDRKGFCEGDEISIHADFENTCSRIVVPKAAIVARHTYLANGQTKVLTQKLSSVRGNHIISGTCASWRGKSLRVQKIRPSILGCNILRVEYSLLIYVSVPGSKKVILDLPLVIGSRSGLSSRTSSMASRTSSEMSWVDLNIPDTPEAPPCYMDVIPEDHRLESPTTPLLDDMDGSQDSPIFMYAPEFKFMPPPTYTEVDPCILNNNVQ.

A Glycyl lysine isopeptide (Lys-Gly) (interchain with G-Cter in ubiquitin) cross-link involves residue K212. S361 carries the phosphoserine modification.

The protein belongs to the arrestin family. As to quaternary structure, homodimer; disulfide-linked. Interacts with TXN/thioredoxin through its redox-active site. Interacts with transcriptional repressors ZBTB16, ZBTB32 and HDAC1. Interacts with DDIT4. Post-translationally, ubiquitinated; undergoes heterotypic 'Lys-48'-/'Lys-63'-branched polyubiquitination catalyzed by ITCH and UBR5 resulting in proteasomal degradation. Deubiquitinated by USP5, leading to TXNIP stabilization.

The protein localises to the cytoplasm. The protein resides in the nucleus. In terms of biological role, may act as an oxidative stress mediator by inhibiting thioredoxin activity or by limiting its bioavailability. Interacts with COPS5 and restores COPS5-induced suppression of CDKN1B stability, blocking the COPS5-mediated translocation of CDKN1B from the nucleus to the cytoplasm. Functions as a transcriptional repressor, possibly by acting as a bridge molecule between transcription factors and corepressor complexes, and over-expression will induce G0/G1 cell cycle arrest. Required for the maturation of natural killer cells. Acts as a suppressor of tumor cell growth. Inhibits the proteasomal degradation of DDIT4, and thereby contributes to the inhibition of the mammalian target of rapamycin complex 1 (mTORC1). In Homo sapiens (Human), this protein is Thioredoxin-interacting protein (TXNIP).